The chain runs to 439 residues: Nuclear hormone receptor family member nhr-97 (439 aa).

The segment covering 1–13 has biased composition (polar residues); sequence MSGDAQPSSNQRA. Residues 1–22 form a disordered region; sequence MSGDAQPSSNQRATEARPPPSP. The nuclear receptor DNA-binding region spans 32–108; sequence GALCVVCGDR…VGMKIEAVKM (77 aa). 2 consecutive NR C4-type zinc fingers follow at residues 35–56 and 72–96; these read CVVC…CHGC and CRYG…FHRC. The disordered stretch occupies residues 112–135; it reads LTKRKKEKTDEDDTDDGGSHESFE. The 236-residue stretch at 173–408 folds into the NR LBD domain; it reads FVQPSLQNLL…GEGLLFWQLY (236 aa).

Belongs to the nuclear hormone receptor family.

Its subcellular location is the nucleus. In terms of biological role, orphan nuclear receptor. This is Nuclear hormone receptor family member nhr-97 (nhr-97) from Caenorhabditis elegans.